Here is a 335-residue protein sequence, read N- to C-terminus: Tetraacyldisaccharide 4'-kinase (335 aa).

Residue 58–65 (TVGGSGKT) participates in ATP binding.

Belongs to the LpxK family.

The enzyme catalyses a lipid A disaccharide + ATP = a lipid IVA + ADP + H(+). The protein operates within glycolipid biosynthesis; lipid IV(A) biosynthesis; lipid IV(A) from (3R)-3-hydroxytetradecanoyl-[acyl-carrier-protein] and UDP-N-acetyl-alpha-D-glucosamine: step 6/6. Functionally, transfers the gamma-phosphate of ATP to the 4'-position of a tetraacyldisaccharide 1-phosphate intermediate (termed DS-1-P) to form tetraacyldisaccharide 1,4'-bis-phosphate (lipid IVA). The chain is Tetraacyldisaccharide 4'-kinase from Shewanella sp. (strain MR-7).